We begin with the raw amino-acid sequence, 510 residues long: O-acetyltransferase pyr7 (510 aa).

This sequence belongs to the fumigaclavine B O-acetyltransferase family.

Its pathway is secondary metabolite biosynthesis; terpenoid biosynthesis. Its function is as follows. O-acetyltransferase; part of the gene cluster that mediates the biosynthesis of pyripyropene A, a specific human acyl-coenzyme A:cholesterol acyltransferase 2 inhibitor. The first step of the pathway is the synthesis of nicotinyl-CoA from nicotinic acid by the nicotinic acid-CoA ligase pyr1. Nicotinyl-CoA is then a substrate of polyketide synthase pyr2 to produce 4-hydroxy-6-(3-pyridinyl)-2H-pyran-2-one (HPPO) which is further prenylated by the polyprenyl transferase pyr6 to yield farnesyl-HPPO. The next steps consist of an epoxidation of farnesyl-HPPO to epoxyfarnesyl-HPPO by FAD-dependent monooxygenase pyr5 and a cyclization of the terpenoid portion by the terpene cyclase pyr4 to yield deacetyl-pyripyropene E. The 2 cytochrome P450 monooxygenases pyr3 and pyr9, and the 2 acetyltransferases pyr7 and pyr8 are involved in the conversion of deacetyl-pyripyropene E into pyripyropene A through several cycles of oxidation and acetylation steps. Pyr7 acetylates deacetyl-pyripyropene E to pyripyropene E which is oxidized to 11-deacetyl-pyripyropene O by pyr3, which is in turn acetylated into pyripyropene O by pyr8. Pyripyropene O is then oxidized to deacetyl-pyripyropene A by pyr9. Deacetyl-pyripyropene A is finally acetylated to pyripyropene A by pyr8. This chain is O-acetyltransferase pyr7, found in Aspergillus fumigatus (strain ATCC MYA-4609 / CBS 101355 / FGSC A1100 / Af293) (Neosartorya fumigata).